The sequence spans 392 residues: tRNA-specific 2-thiouridylase MnmA (392 aa).

Residues 18–25 (AMSGGVDS) and leucine 44 each bind ATP. The active-site Nucleophile is cysteine 112. A disulfide bridge links cysteine 112 with cysteine 208. Glycine 136 serves as a coordination point for ATP. The interaction with tRNA stretch occupies residues 158–160 (RDQ). Cysteine 208 functions as the Cysteine persulfide intermediate in the catalytic mechanism.

The protein belongs to the MnmA/TRMU family.

The protein localises to the cytoplasm. It catalyses the reaction S-sulfanyl-L-cysteinyl-[protein] + uridine(34) in tRNA + AH2 + ATP = 2-thiouridine(34) in tRNA + L-cysteinyl-[protein] + A + AMP + diphosphate + H(+). Functionally, catalyzes the 2-thiolation of uridine at the wobble position (U34) of tRNA, leading to the formation of s(2)U34. This is tRNA-specific 2-thiouridylase MnmA from Rhodospirillum centenum (strain ATCC 51521 / SW).